Here is a 1402-residue protein sequence, read N- to C-terminus: Transcription factor SPT20 homolog (1402 aa).

Disordered regions lie at residues 1 to 29, 60 to 107, 114 to 133, 177 to 206, 786 to 817, 1136 to 1174, and 1199 to 1250; these read MNGN…EQEQ, VNSL…LDTD, NNDS…SSSS, QTTL…NNIL, APST…PTPV, PQQI…QYQT, and QPLQ…PPQI. A compositionally biased stretch (basic and acidic residues) spans 7 to 29; sequence VHTEENKNEHQQEGKGGEQEQEQ. Polar residues predominate over residues 60 to 72; sequence VNSLSEPTPNEQQ. Residues 73–102 show a composition bias toward low complexity; the sequence is NNNNNNNSNGNGNGNDETTSSKTTTIINSN. Composition is skewed to low complexity over residues 183–204, 786–812, 1136–1150, 1157–1174, 1199–1218, and 1226–1250; these read NNNN…NNNN, APST…TTPT, PQQI…PPNQ, SPQS…QYQT, QPLQ…QQQQ, and PQQF…PPQI.

It belongs to the SPT20 family.

The protein is Transcription factor SPT20 homolog of Dictyostelium discoideum (Social amoeba).